A 123-amino-acid polypeptide reads, in one-letter code: Large ribosomal subunit protein uL14c (123 aa).

It belongs to the universal ribosomal protein uL14 family. Part of the 50S ribosomal subunit.

The protein localises to the plastid. It localises to the chloroplast. In terms of biological role, binds to 23S rRNA. This chain is Large ribosomal subunit protein uL14c, found in Sorghum bicolor (Sorghum).